Here is a 156-residue protein sequence, read N- to C-terminus: ATP synthase subunit b (156 aa).

A helical membrane pass occupies residues 7-29 (LLGQAISFALFVWFCIKFVWPPL).

It belongs to the ATPase B chain family. F-type ATPases have 2 components, F(1) - the catalytic core - and F(0) - the membrane proton channel. F(1) has five subunits: alpha(3), beta(3), gamma(1), delta(1), epsilon(1). F(0) has three main subunits: a(1), b(2) and c(10-14). The alpha and beta chains form an alternating ring which encloses part of the gamma chain. F(1) is attached to F(0) by a central stalk formed by the gamma and epsilon chains, while a peripheral stalk is formed by the delta and b chains.

It is found in the cell inner membrane. Functionally, f(1)F(0) ATP synthase produces ATP from ADP in the presence of a proton or sodium gradient. F-type ATPases consist of two structural domains, F(1) containing the extramembraneous catalytic core and F(0) containing the membrane proton channel, linked together by a central stalk and a peripheral stalk. During catalysis, ATP synthesis in the catalytic domain of F(1) is coupled via a rotary mechanism of the central stalk subunits to proton translocation. Component of the F(0) channel, it forms part of the peripheral stalk, linking F(1) to F(0). This is ATP synthase subunit b from Shewanella sp. (strain W3-18-1).